The sequence spans 675 residues: Vitamin K-dependent protein S (675 aa).

A signal peptide spans 1–24 (MRVLSVRFRVLLACLALVLPNSET). Positions 25-41 (NFLSKERASQVLVRKRR) are excised as a propeptide. Residues 42-87 (ANTLLEETKKGNLERECIEELCNKEEAREVFENNPETDYFYPKYLG) form the Gla domain. 4-carboxyglutamate is present on residues E47, E48, E55, E57, E60, E61, E66, E67, E70, E73, and E77. A disulfide bond links C58 and C63. The tract at residues 88-116 (CLGAFRVGAFSAARQSANAYPDLRSCVNA) is thrombin-sensitive. Residues 117 to 155 (IPDQCDPMPCNEDGYLSCKDGQGAFTCICKPGWQGDKCQ) enclose the EGF-like 1 domain. Cystine bridges form between C121–C134, C126–C143, C145–C154, C161–C175, C171–C184, C186–C199, C205–C217, C212–C226, C228–C241, C247–C256, C252–C265, C267–C282, and C449–C475. Position 136 is a (3R)-3-hydroxyaspartate (D136). The 44-residue stretch at 157–200 (DINECKDPSNINGGCSQTCDNTPGSYHCSCKIGFAMLTNKKDCK) folds into the EGF-like 2; calcium-binding domain. Residues 201 to 242 (DVDECSLKPSVCGTAVCKNIPGDFECECPNGYRYDPSSKSCK) form the EGF-like 3; calcium-binding domain. Positions 243-283 (DVDECSENTCAQLCVNYPGGYSCYCDGKKGFKLAQDQRSCE) constitute an EGF-like 4; calcium-binding domain. 2 Laminin G-like domains span residues 299–475 (LLYL…NKHC) and 484–665 (YYPG…AHSC). N499 and N509 each carry an N-linked (GlcNAc...) asparagine glycan.

Post-translationally, the iron and 2-oxoglutarate dependent 3-hydroxylation of aspartate and asparagine is (R) stereospecific within EGF domains. In terms of tissue distribution, plasma.

The protein resides in the secreted. Functionally, anticoagulant plasma protein; it is a cofactor to activated protein C in the degradation of coagulation factors Va and VIIIa. It helps to prevent coagulation and stimulating fibrinolysis. This is Vitamin K-dependent protein S (Pros1) from Rattus norvegicus (Rat).